The chain runs to 843 residues: KN motif and ankyrin repeat domain-containing protein 2 (843 aa).

Positions 1-31 (MAQVLHVPAPFPGTPGQASPAAFPSKEPDPP) are disordered. Positions 1 to 72 (MAQVLHVPAP…AVQRRPRLGS (72 aa)) are interaction with AIFM1. Residues S19, S83, S86, S89, and S92 each carry the phosphoserine modification. Omega-N-methylarginine is present on R105. The tract at residues 161–182 (LAGVGLLPPTPRSSGLSTPVAP) is disordered. T170 carries the phosphothreonine modification. Coiled-coil stretches lie at residues 183–234 (SAGH…QLKS) and 282–313 (DGEA…TQQV). T331 carries the phosphothreonine modification. S358 carries the phosphoserine modification. The tract at residues 410-577 (TERSCTGAPR…VASGPDPEEE (168 aa)) is disordered. Residues 457 to 470 (AAASQDSQAADGAG) show a composition bias toward low complexity. Position 532 is a phosphoserine (S532). A compositionally biased stretch (polar residues) spans 547–561 (ATTSLEGPQLSQESQ). The ANK 0; degenerate repeat unit spans residues 606 to 643 (RELKVAYTTVLQEWLRLACRSDAHPELVRRHLVTFRAM). The segment at 661–827 (TALHYSVSHA…YSRMNIKCSF (167 aa)) is interaction with NCOA1. ANK repeat units lie at residues 673–703 (PVVR…TALA), 707–740 (TQDD…LAVS), 745–774 (DVVR…ACEH), 778–808 (EITG…ALDA), and 812–842 (EIAS…SSAE).

As to quaternary structure, interacts (non-phosphorylated form) with NCOA1; NCOA2 AND NCOA3. Interacts with AIFM1. Interacts with ARHGDIA; the interaction is direct and may regulate the interaction of ARHGDIA with RHOA, RAC1 and CDC42. Interacts (via ANK repeats 1-5) with KIF21A (via residues 1148-1169). Post-translationally, phosphorylated by casein kinase II upon estrogen stimulation. Phosphorylation induces the release by KANK2 of NCOA1 and its translocation to the nucleus where NCOA1 can activate gene transcription. As to expression, widely expressed with highest levels in liver and skeletal muscle.

It localises to the cytoplasm. The protein localises to the mitochondrion. Its function is as follows. Involved in transcription regulation by sequestering in the cytoplasm nuclear receptor coactivators such as NCOA1, NCOA2 and NCOA3. Involved in regulation of caspase-independent apoptosis by sequestering the proapoptotic factor AIFM1 in mitochondria. Pro-apoptotic stimuli can induce its proteasomal degradation allowing the translocation of AIFM1 to the nucleus to induce apoptosis. Involved in the negative control of vitamin D receptor signaling pathway. Involved in actin stress fibers formation through its interaction with ARHGDIA and the regulation of the Rho signaling pathway. May thereby play a role in cell adhesion and migration, regulating for instance podocytes migration during development of the kidney. Through the Rho signaling pathway may also regulate cell proliferation. This is KN motif and ankyrin repeat domain-containing protein 2 (Kank2) from Mus musculus (Mouse).